The chain runs to 227 residues: ATP synthase F(0) complex subunit a (227 aa).

Transmembrane regions (helical) follow at residues 12 to 32, 69 to 89, 98 to 118, 139 to 159, 170 to 190, and 196 to 216; these read PYLM…LLFP, WALL…MGLL, QLSM…LIGL, IPIL…ALGV, LLIQ…PSIS, and ILLL…YVFV.

It belongs to the ATPase A chain family. As to quaternary structure, component of the ATP synthase complex composed at least of ATP5F1A/subunit alpha, ATP5F1B/subunit beta, ATP5MC1/subunit c (homooctomer), MT-ATP6/subunit a, MT-ATP8/subunit 8, ATP5ME/subunit e, ATP5MF/subunit f, ATP5MG/subunit g, ATP5MK/subunit k, ATP5MJ/subunit j, ATP5F1C/subunit gamma, ATP5F1D/subunit delta, ATP5F1E/subunit epsilon, ATP5PF/subunit F6, ATP5PB/subunit b, ATP5PD/subunit d, ATP5PO/subunit OSCP. ATP synthase complex consists of a soluble F(1) head domain (subunits alpha(3) and beta(3)) - the catalytic core - and a membrane F(0) domain - the membrane proton channel (subunits c, a, 8, e, f, g, k and j). These two domains are linked by a central stalk (subunits gamma, delta, and epsilon) rotating inside the F1 region and a stationary peripheral stalk (subunits F6, b, d, and OSCP). Interacts with DNAJC30; interaction is direct.

It localises to the mitochondrion inner membrane. It carries out the reaction H(+)(in) = H(+)(out). Subunit a, of the mitochondrial membrane ATP synthase complex (F(1)F(0) ATP synthase or Complex V) that produces ATP from ADP in the presence of a proton gradient across the membrane which is generated by electron transport complexes of the respiratory chain. ATP synthase complex consist of a soluble F(1) head domain - the catalytic core - and a membrane F(1) domain - the membrane proton channel. These two domains are linked by a central stalk rotating inside the F(1) region and a stationary peripheral stalk. During catalysis, ATP synthesis in the catalytic domain of F(1) is coupled via a rotary mechanism of the central stalk subunits to proton translocation. With the subunit c (ATP5MC1), forms the proton-conducting channel in the F(0) domain, that contains two crucial half-channels (inlet and outlet) that facilitate proton movement from the mitochondrial intermembrane space (IMS) into the matrix. Protons are taken up via the inlet half-channel and released through the outlet half-channel, following a Grotthuss mechanism. The protein is ATP synthase F(0) complex subunit a of Coturnix japonica (Japanese quail).